The chain runs to 668 residues: Beta-galactosidase (668 aa).

The first 24 residues, 1–24 (MARPAAVRVLWALLLPLLLGSARG), serve as a signal peptide directing secretion. A propeptide spanning residues 25-29 (LRNAS) is cleaved from the precursor. Residues tyrosine 84, glutamate 130, and asparagine 188 each contribute to the substrate site. Residue glutamate 189 is the Proton donor of the active site. Residues cysteine 196 and cysteine 231 are joined by a disulfide bond. A glycan (N-linked (GlcNAc...) asparagine) is linked at asparagine 248. Residue glutamate 269 is the Nucleophile of the active site. Tyrosine 334 is a substrate binding site. N-linked (GlcNAc...) asparagine glycosylation is found at asparagine 465, asparagine 499, asparagine 546, and asparagine 556. A disulfide bond links cysteine 627 and cysteine 635.

Belongs to the glycosyl hydrolase 35 family. In terms of assembly, homodimer. May form higher multimers.

It is found in the lysosome. It catalyses the reaction Hydrolysis of terminal non-reducing beta-D-galactose residues in beta-D-galactosides.. Cleaves beta-linked terminal galactosyl residues from gangliosides, glycoproteins, and glycosaminoglycans. This is Beta-galactosidase (GLB1) from Canis lupus familiaris (Dog).